Consider the following 308-residue polypeptide: Phosphoribosylaminoimidazole-succinocarboxamide synthase (308 aa).

The protein belongs to the SAICAR synthetase family.

The catalysed reaction is 5-amino-1-(5-phospho-D-ribosyl)imidazole-4-carboxylate + L-aspartate + ATP = (2S)-2-[5-amino-1-(5-phospho-beta-D-ribosyl)imidazole-4-carboxamido]succinate + ADP + phosphate + 2 H(+). It functions in the pathway purine metabolism; IMP biosynthesis via de novo pathway; 5-amino-1-(5-phospho-D-ribosyl)imidazole-4-carboxamide from 5-amino-1-(5-phospho-D-ribosyl)imidazole-4-carboxylate: step 1/2. The protein is Phosphoribosylaminoimidazole-succinocarboxamide synthase of Stenotrophomonas maltophilia (strain R551-3).